The chain runs to 97 residues: YcgL domain-containing protein APP7_0754 (97 aa).

The region spanning 6-90 (NLCAIYKSPK…PPENLLKTFL (85 aa)) is the YcgL domain.

This Actinobacillus pleuropneumoniae serotype 7 (strain AP76) protein is YcgL domain-containing protein APP7_0754.